The chain runs to 414 residues: MIOREX complex component 10 (414 aa).

The transit peptide at 1 to 29 (MLSFRSLTSTFGFVSRFQIRRLGTSLSIQ) directs the protein to the mitochondrion. Residues 30–373 (NLEVQDGRWK…ISLLNERNST (344 aa)) lie on the Mitochondrial matrix side of the membrane. The chain crosses the membrane as a helical span at residues 374-394 (FLEWIIIYLIAFELCFEIYHF). At 395–414 (YQKYSSYCSEPTNDDLDATK) the chain is on the mitochondrial intermembrane side.

This sequence belongs to the RMD1/sif2 family. As to quaternary structure, associates with the mitochondrial ribosome.

Its subcellular location is the mitochondrion inner membrane. Component of MIOREX complexes, large expressome-like assemblies of ribosomes with factors involved in all the steps of post-transcriptional gene expression. In Saccharomyces cerevisiae (strain ATCC 204508 / S288c) (Baker's yeast), this protein is MIOREX complex component 10.